The chain runs to 754 residues: Aspartyl/asparaginyl beta-hydroxylase (754 aa).

Positions 1-48 (MAPRKNAKGGGGNSSSSSSGSPTGCTSGGSSSPGARRETKQGGLKNGR) are disordered. Topologically, residues 1 to 56 (MAPRKNAKGGGGNSSSSSSGSPTGCTSGGSSSPGARRETKQGGLKNGRKGGLSGSS) are cytoplasmic. Low complexity predominate over residues 14–34 (SSSSSSGSPTGCTSGGSSSPG). Ser15 bears the Phosphoserine mark. Residues 57 to 77 (FFTWFMVIALLGVWTSVAVVW) form a helical; Signal-anchor for type II membrane protein membrane-spanning segment. Residues 78–754 (FDLVDYEEVL…PHQRRSLPAI (677 aa)) are Lumenal-facing. N-linked (GlcNAc...) asparagine glycosylation occurs at Asn96. Ca(2+) contacts are provided by Asp109, Asp111, Asp113, Asp115, and Asp120. Disordered stretches follow at residues 176–197 (VYSE…ELQP) and 247–326 (EQEN…KKKK). Basic and acidic residues-rich tracts occupy residues 261–284 (DAER…DHAV) and 309–318 (TNKKADEPGK). TPR repeat units lie at residues 337–370 (IKAE…YPQS), 378–411 (AQCE…PDAP), 450–483 (TALK…TPND), 485–517 (FAKV…GDPG), and 521–553 (GRFY…GHFA). A glycan (N-linked (GlcNAc...) asparagine) is linked at Asn466. Residue Trp621 coordinates 2-oxoglutarate. A disulfide bridge connects residues Cys637 and Cys644. Ser664 provides a ligand contact to 2-oxoglutarate. Fe cation is bound at residue His675. Residue 684 to 686 (RMH) participates in 2-oxoglutarate binding. Asn702 carries an N-linked (GlcNAc...) asparagine glycan. His721 lines the Fe cation pocket. Position 731 (Arg731) interacts with 2-oxoglutarate.

The protein belongs to the aspartyl/asparaginyl beta-hydroxylase family. Monomer. The cofactor is Fe cation. Might be processed to the 56 kDa (AA 289-754) or 52 kDa (AA 311-754) forms in the lumen of the endoplasmic reticulum.

It localises to the endoplasmic reticulum membrane. It carries out the reaction L-aspartyl-[protein] + 2-oxoglutarate + O2 = 3-hydroxy-L-aspartyl-[protein] + succinate + CO2. Its function is as follows. Specifically hydroxylates an Asp or Asn residue in certain epidermal growth factor-like (EGF) domains of a number of proteins. The chain is Aspartyl/asparaginyl beta-hydroxylase (ASPH) from Bos taurus (Bovine).